Reading from the N-terminus, the 395-residue chain is L-rhamnonate dehydratase (395 aa).

2 residues coordinate substrate: His-23 and Arg-49. Positions 215, 241, and 269 each coordinate Mg(2+). His-319 functions as the Proton acceptor in the catalytic mechanism. Residue Glu-339 coordinates substrate.

The protein belongs to the mandelate racemase/muconate lactonizing enzyme family. RhamD subfamily. In terms of assembly, homooctamer; tetramer of dimers. Mg(2+) is required as a cofactor.

It carries out the reaction L-rhamnonate = 2-dehydro-3-deoxy-L-rhamnonate + H2O. In terms of biological role, catalyzes the dehydration of L-rhamnonate to 2-keto-3-deoxy-L-rhamnonate (KDR). This is L-rhamnonate dehydratase from Delftia acidovorans (strain DSM 14801 / SPH-1).